The primary structure comprises 384 residues: dTDP-dihydrostreptose--streptidine-6-phosphate dihydrostreptosyltransferase (384 aa).

It catalyses the reaction dTDP-L-dihydrostreptose + streptidine 6-phosphate = O-(1-&gt;4)-alpha-L-dihydrostreptosyl-streptidine 6-phosphate + dTDP + H(+). It participates in antibiotic biosynthesis; streptomycin biosynthesis. In terms of biological role, is probably a dihydrostreptosyl glycosyltransferase, involved in the first glycosylation step condensing streptidine-6-phosphate and dihydrostreptose. The sequence is that of dTDP-dihydrostreptose--streptidine-6-phosphate dihydrostreptosyltransferase (strH) from Streptomyces griseus.